A 301-amino-acid polypeptide reads, in one-letter code: Probable alpha-L-glutamate ligase (301 aa).

The 184-residue stretch at 104–287 (LQLLARKGIG…VATKVIEFIE (184 aa)) folds into the ATP-grasp domain. Residues K141, 178-179 (EF), D187, and 211-213 (RSN) each bind ATP. Residues D248, E260, and N262 each coordinate Mg(2+). Positions 248, 260, and 262 each coordinate Mn(2+).

The protein belongs to the RimK family. Requires Mg(2+) as cofactor. It depends on Mn(2+) as a cofactor.

This is Probable alpha-L-glutamate ligase from Nitrosococcus oceani (strain ATCC 19707 / BCRC 17464 / JCM 30415 / NCIMB 11848 / C-107).